Consider the following 491-residue polypeptide: Aspartyl/glutamyl-tRNA(Asn/Gln) amidotransferase subunit B (491 aa).

The protein belongs to the GatB/GatE family. GatB subfamily. As to quaternary structure, heterotrimer of A, B and C subunits.

It carries out the reaction L-glutamyl-tRNA(Gln) + L-glutamine + ATP + H2O = L-glutaminyl-tRNA(Gln) + L-glutamate + ADP + phosphate + H(+). The enzyme catalyses L-aspartyl-tRNA(Asn) + L-glutamine + ATP + H2O = L-asparaginyl-tRNA(Asn) + L-glutamate + ADP + phosphate + 2 H(+). In terms of biological role, allows the formation of correctly charged Asn-tRNA(Asn) or Gln-tRNA(Gln) through the transamidation of misacylated Asp-tRNA(Asn) or Glu-tRNA(Gln) in organisms which lack either or both of asparaginyl-tRNA or glutaminyl-tRNA synthetases. The reaction takes place in the presence of glutamine and ATP through an activated phospho-Asp-tRNA(Asn) or phospho-Glu-tRNA(Gln). The polypeptide is Aspartyl/glutamyl-tRNA(Asn/Gln) amidotransferase subunit B (Nostoc sp. (strain PCC 7120 / SAG 25.82 / UTEX 2576)).